A 737-amino-acid chain; its full sequence is NAD(P)H-quinone oxidoreductase subunit 5, chloroplastic (737 aa).

A run of 16 helical transmembrane segments spans residues 9–29 (WIIPFIPLPVPMLIGAGLILF), 40–60 (WAFQSVLLLSIVMIFSIYLSI), 89–109 (IDPLTSIMSILITTVGIMVLI), 125–145 (FAYMSFFSTSMLGLVTSSNLI), 147–167 (IYIFWELVGLCSYLLIGFWFT), 185–205 (GDFGLLLGILGFYWITGSFEF), 219–239 (NELNFLFVTLCAVLLFAGAVA), 258–278 (TPISALIHAATMVAAGIFLVA), 286–306 (VIPYIMYLISVIGIITVLLGA), 327–347 (LGYMMLALGMGSYRSALFHLI), 354–374 (ALLFLGSGSIIHSMETIVGYS), 396–416 (ITFLLGTLSLCGIPPLACFWS), 425–445 (WLYSPIFAIIAWATAGLTAFY), 543–563 (LFPIFVLGLFTLFVGAIGIPF), 602–622 (VVSVSIAYFGIFIASFLYKPI), and 717–737 (SYLFLYLAYVSVFLLVYYLLF).

It belongs to the complex I subunit 5 family. As to quaternary structure, NDH is composed of at least 16 different subunits, 5 of which are encoded in the nucleus.

The protein localises to the plastid. It is found in the chloroplast thylakoid membrane. It carries out the reaction a plastoquinone + NADH + (n+1) H(+)(in) = a plastoquinol + NAD(+) + n H(+)(out). The catalysed reaction is a plastoquinone + NADPH + (n+1) H(+)(in) = a plastoquinol + NADP(+) + n H(+)(out). NDH shuttles electrons from NAD(P)H:plastoquinone, via FMN and iron-sulfur (Fe-S) centers, to quinones in the photosynthetic chain and possibly in a chloroplast respiratory chain. The immediate electron acceptor for the enzyme in this species is believed to be plastoquinone. Couples the redox reaction to proton translocation, and thus conserves the redox energy in a proton gradient. The protein is NAD(P)H-quinone oxidoreductase subunit 5, chloroplastic (ndhF) of Solanum lycopersicum (Tomato).